The following is a 921-amino-acid chain: Isoleucine--tRNA ligase (921 aa).

Positions 57 to 67 (PYANGELHMGH) match the 'HIGH' region motif. Glu552 lines the L-isoleucyl-5'-AMP pocket. The short motif at 593–597 (KMSKS) is the 'KMSKS' region element. Lys596 serves as a coordination point for ATP. Cys888, Cys891, Cys908, and Cys911 together coordinate Zn(2+).

It belongs to the class-I aminoacyl-tRNA synthetase family. IleS type 1 subfamily. In terms of assembly, monomer. Zn(2+) is required as a cofactor.

It localises to the cytoplasm. It carries out the reaction tRNA(Ile) + L-isoleucine + ATP = L-isoleucyl-tRNA(Ile) + AMP + diphosphate. Catalyzes the attachment of isoleucine to tRNA(Ile). As IleRS can inadvertently accommodate and process structurally similar amino acids such as valine, to avoid such errors it has two additional distinct tRNA(Ile)-dependent editing activities. One activity is designated as 'pretransfer' editing and involves the hydrolysis of activated Val-AMP. The other activity is designated 'posttransfer' editing and involves deacylation of mischarged Val-tRNA(Ile). In Listeria monocytogenes serovar 1/2a (strain ATCC BAA-679 / EGD-e), this protein is Isoleucine--tRNA ligase.